The following is a 277-amino-acid chain: 3-methyl-2-oxobutanoate hydroxymethyltransferase (277 aa).

Residues D53 and D96 each coordinate Mg(2+). 3-methyl-2-oxobutanoate contacts are provided by residues 53–54 (DS), D96, and K126. Residue E128 participates in Mg(2+) binding. E195 (proton acceptor) is an active-site residue.

It belongs to the PanB family. Homodecamer; pentamer of dimers. Mg(2+) is required as a cofactor.

The protein localises to the cytoplasm. The enzyme catalyses 3-methyl-2-oxobutanoate + (6R)-5,10-methylene-5,6,7,8-tetrahydrofolate + H2O = 2-dehydropantoate + (6S)-5,6,7,8-tetrahydrofolate. It participates in cofactor biosynthesis; (R)-pantothenate biosynthesis; (R)-pantoate from 3-methyl-2-oxobutanoate: step 1/2. Functionally, catalyzes the reversible reaction in which hydroxymethyl group from 5,10-methylenetetrahydrofolate is transferred onto alpha-ketoisovalerate to form ketopantoate. The protein is 3-methyl-2-oxobutanoate hydroxymethyltransferase of Chlorobium luteolum (strain DSM 273 / BCRC 81028 / 2530) (Pelodictyon luteolum).